A 210-amino-acid polypeptide reads, in one-letter code: High frequency lysogenization protein HflD homolog (210 aa).

Positions 103–130 (EAKAKLAERLQQIERQLPLYENDIMADQ) form a coiled coil.

Belongs to the HflD family.

The protein resides in the cytoplasm. Its subcellular location is the cell inner membrane. This is High frequency lysogenization protein HflD homolog from Actinobacillus pleuropneumoniae serotype 5b (strain L20).